The chain runs to 621 residues: MPASSFGESSAHIRRRRVAHYLRTESGAAVLLVIVTVVALVWANSPLSNAYFELWHLDVGFNFGPLRLHMDLHHWVNDGLMVVFFFLIGLEVRQEFAHGSLRDRSRARLALIAGVTGVVLPALVYVLIVKLAGSEGLHGWGAVVGTDTAFMLGTLAIVGPRLSGQLRVFLLTLTVVDDFLAVSIIGIVYSEEIRIVPLLIALASLVGLWLLGRTRQWRATPYVLIVIVLWFATVYSGIHASLAGMAAGLLIPAYATQRHGVVAARQLFRDFWQSPSAASARAVDCGLSRGISVNERLHEFLRLPTALLIVPIFALANAGVDVRGGLLAEAFGSPVTWGVIAGLVLGKLLGIGLTTLVAVRLGLGRLPEGVGVGSVFGGAALSGIGFTVSLLIIGLAFGTTSDLGRQATVGVLVSMVFATLLGWLIFKVAAQRWGEKTADLPMVLEPPVDPEIDHIRGPEDAQLTLVEYVDFECAYCAHATGSWDDLRAHFGDDLRYVVRHLPHHPHGPIAARASEAAANQGMFWPWLDFVFTRQHALEREHLIGYAAELGLDVERFIADLDSPAVIERVERDLASAVASGAHATPTFFVEGRRLRGSYDARTVTAVLEASRRGTRTQEVPS.

The interval 1–430 (MPASSFGESS…LGWLIFKVAA (430 aa)) is na(+)/H(+) antiporter NhaA. Helical transmembrane passes span 27–47 (GAAVLLVIVTVVALVWANSPL), 72–92 (LHHWVNDGLMVVFFFLIGLEV), 109–129 (LALIAGVTGVVLPALVYVLIV), 139–159 (GWGAVVGTDTAFMLGTLAIVG), 168–188 (VFLLTLTVVDDFLAVSIIGIV), 192–212 (EIRIVPLLIALASLVGLWLLG), 223–243 (VLIVIVLWFATVYSGIHASLA), 300–320 (FLRLPTALLIVPIFALANAGV), 339–359 (VIAGLVLGKLLGIGLTTLVAV), 375–395 (VFGGAALSGIGFTVSLLIIGL), and 409–429 (VGVLVSMVFATLLGWLIFKVA). The Thioredoxin domain maps to 431-578 (QRWGEKTADL…VERDLASAVA (148 aa)).

It in the N-terminal section; belongs to the NhaA Na(+)/H(+) (TC 2.A.33) antiporter family.

The protein resides in the cell inner membrane. The catalysed reaction is Na(+)(in) + 2 H(+)(out) = Na(+)(out) + 2 H(+)(in). In terms of biological role, na(+)/H(+) antiporter that extrudes sodium in exchange for external protons. The sequence is that of Na(+)/H(+) antiporter NhaA from Herminiimonas arsenicoxydans.